A 131-amino-acid polypeptide reads, in one-letter code: D-ribose pyranase (131 aa).

Residue H20 is the Proton donor of the active site. Substrate is bound by residues D28, H98, and 120 to 122 (YAN).

It belongs to the RbsD / FucU family. RbsD subfamily. As to quaternary structure, homodecamer.

The protein resides in the cytoplasm. It carries out the reaction beta-D-ribopyranose = beta-D-ribofuranose. It functions in the pathway carbohydrate metabolism; D-ribose degradation; D-ribose 5-phosphate from beta-D-ribopyranose: step 1/2. Functionally, catalyzes the interconversion of beta-pyran and beta-furan forms of D-ribose. This Chloroflexus aggregans (strain MD-66 / DSM 9485) protein is D-ribose pyranase.